The primary structure comprises 367 residues: MEKSSIYGLTWTKLTEWLEAHGQKKFRATQVWDWLYRKRVKTFEEMSNVPKETIELLTANFVMNTLEEQVVQESTDGTTKYLFKLSDGNLIETVMMKQEYGLSVCVTTQVGCNIGCTFCASGLLKKSRDLTAGEIVEQIMNVQHYLDGRNLEERVSHVVVMGIGEPFDNYDNVMDFLRVINHDKGLAIGARHITVSTSGLAPRIIDFANEDFQVNLAISLHAPNNELRTSIMRINKTYSIEKLMEAIHYYVNKTNRRITFEYIMLKGVNDHKKEALELAALLGEHRHLAYVNLIPYNPVDEHIDYERSTKEDVLAFYDTLKKNGINCVIRREHGTDIDAACGQLRSKQIKRVGVRERMKQKQAALEE.

Residue Glu-92 is the Proton acceptor of the active site. The Radical SAM core domain maps to 98–326 (QEYGLSVCVT…YDTLKKNGIN (229 aa)). Cys-105 and Cys-341 are disulfide-bonded. [4Fe-4S] cluster-binding residues include Cys-112, Cys-116, and Cys-119. Residues 164–165 (GE), Ser-196, 219–221 (SLH), and Asn-297 contribute to the S-adenosyl-L-methionine site. The S-methylcysteine intermediate role is filled by Cys-341.

This sequence belongs to the radical SAM superfamily. RlmN family. [4Fe-4S] cluster is required as a cofactor.

The protein localises to the cytoplasm. It catalyses the reaction adenosine(2503) in 23S rRNA + 2 reduced [2Fe-2S]-[ferredoxin] + 2 S-adenosyl-L-methionine = 2-methyladenosine(2503) in 23S rRNA + 5'-deoxyadenosine + L-methionine + 2 oxidized [2Fe-2S]-[ferredoxin] + S-adenosyl-L-homocysteine. The catalysed reaction is adenosine(37) in tRNA + 2 reduced [2Fe-2S]-[ferredoxin] + 2 S-adenosyl-L-methionine = 2-methyladenosine(37) in tRNA + 5'-deoxyadenosine + L-methionine + 2 oxidized [2Fe-2S]-[ferredoxin] + S-adenosyl-L-homocysteine. Specifically methylates position 2 of adenine 2503 in 23S rRNA and position 2 of adenine 37 in tRNAs. In Listeria welshimeri serovar 6b (strain ATCC 35897 / DSM 20650 / CCUG 15529 / CIP 8149 / NCTC 11857 / SLCC 5334 / V8), this protein is Probable dual-specificity RNA methyltransferase RlmN.